Reading from the N-terminus, the 227-residue chain is Cytochrome c oxidase subunit 2 (227 aa).

Residues 1-14 lie on the Mitochondrial intermembrane side of the membrane; the sequence is MAYPFQLGLQDATS. A helical membrane pass occupies residues 15-45; that stretch reads PIMEELLHFHDHTLMIVFLISSLVLYIISLM. Residues 46-59 lie on the Mitochondrial matrix side of the membrane; it reads LTTKLTHTSTMDAQ. A helical membrane pass occupies residues 60 to 87; the sequence is EVETVWTILPAIILILIALPSLRILYMM. Over 88–227 the chain is Mitochondrial intermembrane; it reads DEINNPSLTV…YFETWSAVMV (140 aa). The Cu cation site is built by His-161, Cys-196, Glu-198, Cys-200, His-204, and Met-207. Glu-198 is a binding site for Mg(2+). Position 218 is a phosphotyrosine (Tyr-218).

This sequence belongs to the cytochrome c oxidase subunit 2 family. Component of the cytochrome c oxidase (complex IV, CIV), a multisubunit enzyme composed of 14 subunits. The complex is composed of a catalytic core of 3 subunits MT-CO1, MT-CO2 and MT-CO3, encoded in the mitochondrial DNA, and 11 supernumerary subunits COX4I, COX5A, COX5B, COX6A, COX6B, COX6C, COX7A, COX7B, COX7C, COX8 and NDUFA4, which are encoded in the nuclear genome. The complex exists as a monomer or a dimer and forms supercomplexes (SCs) in the inner mitochondrial membrane with NADH-ubiquinone oxidoreductase (complex I, CI) and ubiquinol-cytochrome c oxidoreductase (cytochrome b-c1 complex, complex III, CIII), resulting in different assemblies (supercomplex SCI(1)III(2)IV(1) and megacomplex MCI(2)III(2)IV(2)). Found in a complex with TMEM177, COA6, COX18, COX20, SCO1 and SCO2. Interacts with TMEM177 in a COX20-dependent manner. Interacts with COX20. Interacts with COX16. It depends on Cu cation as a cofactor.

Its subcellular location is the mitochondrion inner membrane. It carries out the reaction 4 Fe(II)-[cytochrome c] + O2 + 8 H(+)(in) = 4 Fe(III)-[cytochrome c] + 2 H2O + 4 H(+)(out). In terms of biological role, component of the cytochrome c oxidase, the last enzyme in the mitochondrial electron transport chain which drives oxidative phosphorylation. The respiratory chain contains 3 multisubunit complexes succinate dehydrogenase (complex II, CII), ubiquinol-cytochrome c oxidoreductase (cytochrome b-c1 complex, complex III, CIII) and cytochrome c oxidase (complex IV, CIV), that cooperate to transfer electrons derived from NADH and succinate to molecular oxygen, creating an electrochemical gradient over the inner membrane that drives transmembrane transport and the ATP synthase. Cytochrome c oxidase is the component of the respiratory chain that catalyzes the reduction of oxygen to water. Electrons originating from reduced cytochrome c in the intermembrane space (IMS) are transferred via the dinuclear copper A center (CU(A)) of subunit 2 and heme A of subunit 1 to the active site in subunit 1, a binuclear center (BNC) formed by heme A3 and copper B (CU(B)). The BNC reduces molecular oxygen to 2 water molecules using 4 electrons from cytochrome c in the IMS and 4 protons from the mitochondrial matrix. The chain is Cytochrome c oxidase subunit 2 (MT-CO2) from Lycalopex culpaeus (Culpeo fox).